A 130-amino-acid chain; its full sequence is Small ribosomal subunit protein uS9 (130 aa).

Residues 99 to 110 (KKAGFLTRDPRM) show a composition bias toward basic and acidic residues. Residues 99–130 (KKAGFLTRDPRMKERKKYGLKKARRAPQFSKR) form a disordered region. Residues 111–130 (KERKKYGLKKARRAPQFSKR) are compositionally biased toward basic residues.

Belongs to the universal ribosomal protein uS9 family.

This is Small ribosomal subunit protein uS9 from Clostridium botulinum (strain Eklund 17B / Type B).